A 133-amino-acid polypeptide reads, in one-letter code: Small ribosomal subunit protein uS8c (133 aa).

Belongs to the universal ribosomal protein uS8 family. As to quaternary structure, part of the 30S ribosomal subunit.

The protein localises to the plastid. Its subcellular location is the chloroplast. One of the primary rRNA binding proteins, it binds directly to 16S rRNA central domain where it helps coordinate assembly of the platform of the 30S subunit. This Mesostigma viride (Green alga) protein is Small ribosomal subunit protein uS8c (rps8).